The primary structure comprises 259 residues: Deoxyribose-phosphate aldolase (259 aa).

The active-site Proton donor/acceptor is D101. Residue K166 is the Schiff-base intermediate with acetaldehyde of the active site. The active-site Proton donor/acceptor is the K200.

It belongs to the DeoC/FbaB aldolase family. DeoC type 2 subfamily.

Its subcellular location is the cytoplasm. It catalyses the reaction 2-deoxy-D-ribose 5-phosphate = D-glyceraldehyde 3-phosphate + acetaldehyde. Its pathway is carbohydrate degradation; 2-deoxy-D-ribose 1-phosphate degradation; D-glyceraldehyde 3-phosphate and acetaldehyde from 2-deoxy-alpha-D-ribose 1-phosphate: step 2/2. Catalyzes a reversible aldol reaction between acetaldehyde and D-glyceraldehyde 3-phosphate to generate 2-deoxy-D-ribose 5-phosphate. This chain is Deoxyribose-phosphate aldolase, found in Glaesserella parasuis serovar 5 (strain SH0165) (Haemophilus parasuis).